We begin with the raw amino-acid sequence, 408 residues long: Snake venom metalloproteinase BaP1 (408 aa).

The N-terminal stretch at Met1–Ser20 is a signal peptide. Residues Ile21–Glu191 constitute a propeptide that is removed on maturation. The residue at position 192 (Gln192) is a Pyrrolidone carboxylic acid. The Peptidase M12B domain occupies Arg198–Pro394. Disulfide bonds link Cys309/Cys389, Cys349/Cys373, and Cys351/Cys356. Zn(2+) is bound at residue His334. Glu335 is a catalytic residue. Residues His338 and His344 each contribute to the Zn(2+) site. Positions Leu395–Glu408 are excised as a propeptide.

This sequence belongs to the venom metalloproteinase (M12B) family. P-I subfamily. Monomer. The cofactor is Zn(2+). As to expression, expressed by the venom gland.

The protein localises to the secreted. Inhibited by EDTA, partially inhibited by o-phenantropine, and not inhibited by PMSF, pepstatin A, and aprotinin. Zinc metalloprotease that exhibits a weak hemorrhagic activity (with a minimum hemorrhagic dose of 20 ug by intradermal and intramuscular injection into mice). The basal membrane components collagen (all chains of type IV) (COL4A4), laminin and nidogen are all degraded by this toxin. Rapidly degrades the Aalpha-chain (FGA) of fibrinogen, and later on, degrades the Bbeta-chain (FGB) of fibrinogen. Also activates the complement system, and induces rat neutrophil chemotaxis. Induces edema in mouse food pad and shows a mild myotoxicity. This is Snake venom metalloproteinase BaP1 from Bothrops asper (Terciopelo).